Reading from the N-terminus, the 54-residue chain is MLRYAIVFFIIALIAALFGFTGIAAGAVEIAKIMFFIFVLLALVSLVMGFTRRK.

A run of 2 helical transmembrane segments spans residues 5 to 25 and 30 to 50; these read AIVFFIIALIAALFGFTGIAA and IAKIMFFIFVLLALVSLVMGF.

It belongs to the UPF0391 family.

The protein localises to the cell membrane. The chain is UPF0391 membrane protein Daro_2080 from Dechloromonas aromatica (strain RCB).